A 167-amino-acid polypeptide reads, in one-letter code: Photosystem I assembly protein Ycf3 (167 aa).

TPR repeat units follow at residues 35-68 (AFAY…EVDA), 72-105 (SYIL…NPSL), and 120-153 (GEQA…APTS).

It belongs to the Ycf3 family.

The protein resides in the plastid. The protein localises to the chloroplast thylakoid membrane. Its function is as follows. Essential for the assembly of the photosystem I (PSI) complex. May act as a chaperone-like factor to guide the assembly of the PSI subunits. The chain is Photosystem I assembly protein Ycf3 from Chlorokybus atmophyticus (Soil alga).